The primary structure comprises 343 residues: tRNA N6-adenosine threonylcarbamoyltransferase (343 aa).

The Fe cation site is built by histidine 120 and histidine 124. Residues 142 to 146 (VVSGG), aspartate 175, glycine 188, aspartate 192, and asparagine 281 each bind substrate. Aspartate 309 is a Fe cation binding site.

It belongs to the KAE1 / TsaD family. Requires Fe(2+) as cofactor.

The protein localises to the cytoplasm. The catalysed reaction is L-threonylcarbamoyladenylate + adenosine(37) in tRNA = N(6)-L-threonylcarbamoyladenosine(37) in tRNA + AMP + H(+). In terms of biological role, required for the formation of a threonylcarbamoyl group on adenosine at position 37 (t(6)A37) in tRNAs that read codons beginning with adenine. Is involved in the transfer of the threonylcarbamoyl moiety of threonylcarbamoyl-AMP (TC-AMP) to the N6 group of A37, together with TsaE and TsaB. TsaD likely plays a direct catalytic role in this reaction. The chain is tRNA N6-adenosine threonylcarbamoyltransferase from Halalkalibacterium halodurans (strain ATCC BAA-125 / DSM 18197 / FERM 7344 / JCM 9153 / C-125) (Bacillus halodurans).